We begin with the raw amino-acid sequence, 1641 residues long: Ophiophagus venom factor (1641 aa).

The N-terminal stretch at 1-22 (MEGMALYLVAALLIGFPGSSHG) is a signal peptide. Residues Asn181 and Asn209 are each glycosylated (N-linked (GlcNAc...) asparagine). Positions 507, 530, 531, and 533 each coordinate Mg(2+). 12 disulfide bridges follow: Cys535/Cys796, Cys604/Cys639, Cys672/Cys699, Cys673/Cys706, Cys686/Cys707, Cys852/Cys1491, Cys1336/Cys1467, Cys1367/Cys1436, Cys1484/Cys1489, Cys1496/Cys1568, Cys1515/Cys1639, and Cys1615/Cys1624. Positions 645–728 (RRRRSSVLLL…WESGLFLPRN (84 aa)) are excised as a propeptide. The interval 649–727 (SSVLLLDSKA…QWESGLFLPR (79 aa)) is C3a-like domain. In terms of domain architecture, Anaphylatoxin-like spans 672-707 (CCEDSMHENPMGYTCEKRAKYIQEGDACKAAFLECC). The tract at residues 731-742 (EDGFIQDSDIIP) is factor B binding site. A propeptide spanning residues 981 to 1259 (HLIITPSGCG…VMLFQALAEY (279 aa)) is cleaved from the precursor. Positions 981–1259 (HLIITPSGCG…VMLFQALAEY (279 aa)) are C3d-like domain. The isoglutamyl cysteine thioester (Cys-Gln) cross-link spans 989-992 (CGEQ). The interval 1186–1249 (VLMAASTGKN…GGTYGQTQAT (64 aa)) is factor H binding site. One can recognise an NTR domain in the interval 1496-1639 (CSLLSQQEKI…LSNILTIFGC (144 aa)).

The protein belongs to the venom complement C3 homolog family. In terms of assembly, heterotrimer of alpha, beta and gamma chains; disulfide-linked. May be active with factor B in the presence of factor D. Post-translationally, first processed by the removal of 4 Arg residues by furin-type protease, forming two chains, alpha and gamma/beta precursor, linked by a disulfide bond. Probably, a cobrin-like protease cleaves the C3a-like domain and then the C3d-like domain, generating the mature venom factor (OVF). In terms of processing, the beta chain is not glycosylated. Expressed by the venom gland.

Its subcellular location is the secreted. Its function is as follows. Complement-activating protein in cobra venom. It is a structural and functional analog of complement component C3b, the activated form of C3. It binds factor B (CFB), which is subsequently cleaved by factor D (CFD) to form the bimolecular complex OVF/Bb. OVF/Bb is a C3/C5 convertase that cleaves both complement components C3 and C5. Structurally, it resembles the C3b degradation product C3c, which is not able to form a C3/C5 convertase. Unlike C3b/Bb, OVF/Bb is a stable complex and completely resistant to the actions of complement regulatory factors H (CFH) and I (CFI). Therefore, OVF continuously activates complement. As a result, OVF exhibits complement-depleting activity. This is Ophiophagus venom factor from Ophiophagus hannah (King cobra).